The following is a 300-amino-acid chain: MARERTVEIREHEVPDPAGGPYGITAGPDGALWFTLVHSGLIARLAPGGEATTHRLDADSGPAIITAGADGALWFTEHRAHRIGRLTTEDGLTEFAPPTPQAGPYGLATGADGALWFTEASAGRIGRITAEGEIAEFGLPVPGAFPSMIAAGPDDAMWFTANQANAIGRMSFDGTAVLHELPTEAAAPVGLALGPDGALWFTEIGAGQIGRVTADGAISEFPLPDRTSRPHAIVARGDELWFTEWGANRVGRIDLDGRIDVHELPTPNSEPHGIAVGQDGALWVALENGALARVAPESHD.

H231 serves as a coordination point for substrate. E270 provides a ligand contact to Mg(2+). Catalysis depends on H272, which acts as the Proton acceptor. E287 is a binding site for Mg(2+).

The protein belongs to the Vgb family. Monomer. Requires Mg(2+) as cofactor.

Its function is as follows. Inactivates the type B streptogramin antibiotics by linearizing the lactone ring at the ester linkage, generating a free phenylglycine carboxylate and converting the threonyl moiety into 2-amino-butenoic acid. This chain is Virginiamycin B lyase, found in Saccharopolyspora erythraea (strain ATCC 11635 / DSM 40517 / JCM 4748 / NBRC 13426 / NCIMB 8594 / NRRL 2338).